The sequence spans 414 residues: Myb1 protein (414 aa).

Myb-like domains follow at residues 242-266 (WNEV…LYYG), 268-320 (FEDD…IKIN), and 328-381 (KVKL…TNLN).

The protein localises to the nucleus. Its function is as follows. Transcriptional activator. Has a role in the parasite erythrocytic cycle where it directly regulates key genes involved in cell cycle regulation and progression. Binds directly to Myb regulatory elements. The protein is Myb1 protein of Plasmodium falciparum (isolate 3D7).